Consider the following 452-residue polypeptide: UDP-N-acetylmuramoyl-tripeptide--D-alanyl-D-alanine ligase (452 aa).

107 to 113 is an ATP binding site; it reads GSSGKTS.

The protein belongs to the MurCDEF family. MurF subfamily. Monomer.

Its subcellular location is the cytoplasm. It catalyses the reaction D-alanyl-D-alanine + UDP-N-acetyl-alpha-D-muramoyl-L-alanyl-gamma-D-glutamyl-meso-2,6-diaminopimelate + ATP = UDP-N-acetyl-alpha-D-muramoyl-L-alanyl-gamma-D-glutamyl-meso-2,6-diaminopimeloyl-D-alanyl-D-alanine + ADP + phosphate + H(+). The protein operates within cell wall biogenesis; peptidoglycan biosynthesis. Its function is as follows. Involved in cell wall formation. Catalyzes the final step in the synthesis of UDP-N-acetylmuramoyl-pentapeptide, the precursor of murein. This is UDP-N-acetylmuramoyl-tripeptide--D-alanyl-D-alanine ligase from Escherichia coli (strain K12).